The sequence spans 26 residues: Guentherin (26 aa).

As to expression, expressed by the skin glands.

The protein resides in the secreted. Antimicrobial peptide. Active against the Gram-positive bacteria S.aureus FDA209P (MIC=35.5 ug/ml) and B.subtilis ATCC 6633 (MIC&gt;64 ug/ml), but not active against the Gram-negative bacterium E.coli or the fungus C.albicans. The polypeptide is Guentherin (Sylvirana guentheri (Gunther's frog)).